The following is a 178-amino-acid chain: Protein GrpE (178 aa).

This sequence belongs to the GrpE family. As to quaternary structure, homodimer.

The protein resides in the cytoplasm. In terms of biological role, participates actively in the response to hyperosmotic and heat shock by preventing the aggregation of stress-denatured proteins, in association with DnaK and GrpE. It is the nucleotide exchange factor for DnaK and may function as a thermosensor. Unfolded proteins bind initially to DnaJ; upon interaction with the DnaJ-bound protein, DnaK hydrolyzes its bound ATP, resulting in the formation of a stable complex. GrpE releases ADP from DnaK; ATP binding to DnaK triggers the release of the substrate protein, thus completing the reaction cycle. Several rounds of ATP-dependent interactions between DnaJ, DnaK and GrpE are required for fully efficient folding. This is Protein GrpE from Rickettsia prowazekii (strain Madrid E).